A 509-amino-acid polypeptide reads, in one-letter code: MEFSGRKWRKLRLAGDQRNASYPHCLQFYLQPPSENISLIEFENLAIDRVKLLKSVENLGVSYVKGTEQYQSKLESELRKLKFSYRENLEDEYEPRRRDHISHFILRLAYCQSEELRRWFIQQEMDLLRFRFSILPKDKIQDFLKDSQLQFEAISDEEKTLREQEIVASSPSLSGLKLGFESIYKIPFADALDLFRGRKVYLEDGFAYVPLKDIVAIILNEFRAKLSKALALTARSLPAVQSDERLQPLLNHLSHSYTGQDYSTQGNVGKISLDQIDLLSTKSFPPCMRQLHKALRENHHLRHGGRMQYGLFLKGIGLTLEQALQFWKQEFIKGKMDPDKFDKGYSYNIRHSFGKEGKRTDYTPFSCLKIILSNPPSQGDYHGCPFRHSDPELLKQKLQSYKISPGGISQILDLVKGTHYQVACQKYFEMIHNVDDCGFSLNHPNQFFCESQRILNGGKDIKKEPIQPETPQPKPSVQKTKDASSALASLNSSLEMDMEGLEDYFSEDS.

Residues 253–270 (LSHSYTGQDYSTQGNVGK) are interdomain linker. Residues 266 to 509 (GNVGKISLDQ…GLEDYFSEDS (244 aa)) are interacts with PRIM1. Positions 287, 367, 384, and 424 each coordinate [4Fe-4S] cluster. An RNA:DNA duplex-binding region spans residues 300–442 (HLRHGGRMQY…NVDDCGFSLN (143 aa)). The tract at residues 461–486 (IKKEPIQPETPQPKPSVQKTKDASSA) is disordered. Thr470 is subject to Phosphothreonine.

Belongs to the eukaryotic-type primase large subunit family. In terms of assembly, heterodimer of a catalytic subunit PRIM1 and a regulatory subunit PRIM2, also known as the DNA primase complex. Interacts via (C-terminus) with PRIM1. Component of the alpha DNA polymerase complex (also known as the alpha DNA polymerase-primase complex) consisting of four subunits: the catalytic subunit POLA1, the regulatory subunit POLA2, and the primase complex subunits PRIM1 and PRIM2 respectively. Within the complex, POLA1 directly interacts with PRIM2. It depends on [4Fe-4S] cluster as a cofactor.

Regulatory subunit of the DNA primase complex and component of the DNA polymerase alpha complex (also known as the alpha DNA polymerase-primase complex) which play an essential role in the initiation of DNA synthesis. During the S phase of the cell cycle, the DNA polymerase alpha complex (composed of a catalytic subunit POLA1, an accessory subunit POLA2 and two primase subunits, the catalytic subunit PRIM1 and the regulatory subunit PRIM2) is recruited to DNA at the replicative forks via direct interactions with MCM10 and WDHD1. The primase subunit of the polymerase alpha complex initiates DNA synthesis by oligomerising short RNA primers on both leading and lagging strands. These primers are initially extended by the polymerase alpha catalytic subunit and subsequently transferred to polymerase delta and polymerase epsilon for processive synthesis on the lagging and leading strand, respectively. In the primase complex, both subunits are necessary for the initial di-nucleotide formation, but the extension of the primer depends only on the catalytic subunit. Binds RNA:DNA duplex and coordinates the catalytic activities of PRIM1 and POLA2 during primase-to-polymerase switch. In Homo sapiens (Human), this protein is DNA primase large subunit (PRIM2).